The primary structure comprises 826 residues: Homeobox-leucine zipper protein HDG5 (826 aa).

2 disordered regions span residues 1-34 (MLTMGEGNVMTSNNRFASPPQQPSSSSPGTIQNP) and 69-119 (EMME…HRHT). The segment covering 23 to 34 (PSSSSPGTIQNP) has biased composition (low complexity). A compositionally biased stretch (basic and acidic residues) spans 88-105 (EDPKFGNESDVNELHDDE). Residues 110–119 (AKKKRYHRHT) are compositionally biased toward basic residues. The homeobox DNA-binding region spans 111–170 (KKKRYHRHTNRQIQEMEALFKENPHPDDKQRKRLSAELGLKPRQVKFWFQNRRTQMKAQQ). Positions 165–189 (QMKAQQDRNENVMLRAENDNLKSEN) form a coiled coil. The START domain maps to 314-558 (ADEEKVIAME…LQRQCERIAS (245 aa)).

The protein belongs to the HD-ZIP homeobox family. Class IV subfamily. Expressed in shoot apical meristem (SAM) with higher levels in L1 cells and the epidermal layer of young leaves. Expressed in the L1 of apical inflorescence meristems, early flower primordia, carpel and stamen filament epidermis, ovule primordia, nucellus and chalaze.

It is found in the nucleus. Its function is as follows. Probable transcription factor. Involved, together with PDF2, in the regulation of flower organs development by promoting the expression of APETALA 3 (AP3) in the epidermis and internal cell layers of developing flowers. The polypeptide is Homeobox-leucine zipper protein HDG5 (Arabidopsis thaliana (Mouse-ear cress)).